A 534-amino-acid polypeptide reads, in one-letter code: Cytokinin dehydrogenase 1 (534 aa).

A signal peptide spans 1–18 (MAVVYYLLLAGLIACSHA). Residues N52, N63, and N89 are each glycosylated (N-linked (GlcNAc...) asparagine). An FAD-binding PCMH-type domain is found at 65–245 (TSALPAAVLY…TRARIAVEPA (181 aa)). Residues F100, G102, R103, and G104 each contribute to the FAD site. A Pros-8alpha-FAD histidine modification is found at H105. Residues S106 and Q110 each contribute to the FAD site. N-linked (GlcNAc...) asparagine glycosylation is present at N134. FAD is bound by residues D169, T174, S180, I184, and I235. N(6)-dimethylallyladenine is bound at residue D169. Residue D169 coordinates trans-zeatin. N-linked (GlcNAc...) asparagine glycans are attached at residues N294, N323, and N338. Position 381 (E381) interacts with N(6)-dimethylallyladenine. Trans-zeatin is bound at residue E381. N434 carries an N-linked (GlcNAc...) asparagine glycan. Residue S456 participates in trans-zeatin binding. The FAD site is built by Y491, S527, and Q530.

This sequence belongs to the oxygen-dependent FAD-linked oxidoreductase family. Monomer. It depends on FAD as a cofactor. Post-translationally, glycosylated; with approximately 10 hexose residues per site. In terms of tissue distribution, expressed in immature kernels and unpollinated cobs. Weakly expressed in kernels harvested two weeks after anthesis.

Its subcellular location is the secreted. It localises to the extracellular space. The catalysed reaction is N(6)-dimethylallyladenine + A + H2O = 3-methyl-2-butenal + adenine + AH2. With respect to regulation, competitive inhibition by phenylureas. Functionally, catalyzes the oxidation of cytokinins, a family of N(6)-substituted adenine derivatives that are plant hormones, where the substituent is an isopentenyl group. Cleaves trans-zeatin, N(6)-dimethylallyladenine (isopentenyladenine), isopentenyladenosine, zeatin riboside and cis-zeatin, but not dihydrozeatin, kinetin and benzylaminopurine. In Zea mays (Maize), this protein is Cytokinin dehydrogenase 1 (CKX1).